Reading from the N-terminus, the 564-residue chain is Pyruvate decarboxylase (564 aa).

Pyruvate-binding residues include D28 and H115. Thiamine diphosphate-binding positions include T390 and 413-415 (GSI). Position 444 (D444) interacts with Mg(2+). Thiamine diphosphate is bound by residues 445 to 446 (GS) and 471 to 476 (NNGYTI). The Mg(2+) site is built by N471 and G473. Residue E477 participates in pyruvate binding.

This sequence belongs to the TPP enzyme family. Homotetramer. It depends on Mg(2+) as a cofactor. Thiamine diphosphate serves as cofactor.

The catalysed reaction is a 2-oxocarboxylate + H(+) = an aldehyde + CO2. The enzyme catalyses pyruvate + H(+) = acetaldehyde + CO2. The sequence is that of Pyruvate decarboxylase (PDC) from Hanseniaspora uvarum (Yeast).